A 50-amino-acid chain; its full sequence is Defensin-like protein 1 (50 aa).

4 cysteine pairs are disulfide-bonded: cysteine 2/cysteine 50, cysteine 14/cysteine 35, cysteine 20/cysteine 44, and cysteine 24/cysteine 46.

Belongs to the DEFL family.

It is found in the secreted. In terms of biological role, possesses antimicrobial activity sensitive to inorganic cations. Binds specifically to the fungal plasma membrane. Has no inhibitory effect on insect gut alpha-amylase. This Aesculus hippocastanum (Horse chestnut) protein is Defensin-like protein 1.